A 47-amino-acid polypeptide reads, in one-letter code: Heat shock protein HSP 90 (47 aa).

The protein belongs to the heat shock protein 90 family. In terms of assembly, homodimer.

The protein resides in the cytoplasm. Functionally, putative molecular chaperone that may promote the maturation, structural maintenance and proper regulation of specific target proteins. The polypeptide is Heat shock protein HSP 90 (Oryctolagus cuniculus (Rabbit)).